The primary structure comprises 621 residues: Chaperone protein HscA homolog (621 aa).

This sequence belongs to the heat shock protein 70 family.

In terms of biological role, chaperone involved in the maturation of iron-sulfur cluster-containing proteins. Has a low intrinsic ATPase activity which is markedly stimulated by HscB. This Pseudomonas fluorescens (strain Pf0-1) protein is Chaperone protein HscA homolog.